The following is a 166-amino-acid chain: Urease accessory protein UreE (166 aa).

Residues 133–154 (QPEHGAYGGGHHHSRHGDEDFN) are disordered.

The protein belongs to the UreE family.

The protein localises to the cytoplasm. Its function is as follows. Involved in urease metallocenter assembly. Binds nickel. Probably functions as a nickel donor during metallocenter assembly. This chain is Urease accessory protein UreE, found in Pseudomonas fluorescens (strain SBW25).